A 335-amino-acid polypeptide reads, in one-letter code: Beta-ketoacyl-[acyl-carrier-protein] synthase III 2 (335 aa).

Active-site residues include cysteine 116 and histidine 256. The ACP-binding stretch occupies residues 257–261 (QANVR). Asparagine 286 is an active-site residue.

Belongs to the thiolase-like superfamily. FabH family. In terms of assembly, homodimer.

Its subcellular location is the cytoplasm. It carries out the reaction malonyl-[ACP] + acetyl-CoA + H(+) = 3-oxobutanoyl-[ACP] + CO2 + CoA. The protein operates within lipid metabolism; fatty acid biosynthesis. Catalyzes the condensation reaction of fatty acid synthesis by the addition to an acyl acceptor of two carbons from malonyl-ACP. Catalyzes the first condensation reaction which initiates fatty acid synthesis and may therefore play a role in governing the total rate of fatty acid production. Possesses both acetoacetyl-ACP synthase and acetyl transacylase activities. Its substrate specificity determines the biosynthesis of branched-chain and/or straight-chain of fatty acids. The sequence is that of Beta-ketoacyl-[acyl-carrier-protein] synthase III 2 from Bacteroides thetaiotaomicron (strain ATCC 29148 / DSM 2079 / JCM 5827 / CCUG 10774 / NCTC 10582 / VPI-5482 / E50).